The following is a 440-amino-acid chain: Xaa-Pro dipeptidase (440 aa).

Mn(2+) is bound by residues Asp244, Asp255, His335, Glu380, and Glu419.

The protein belongs to the peptidase M24B family. Bacterial-type prolidase subfamily. Mn(2+) serves as cofactor.

The enzyme catalyses Xaa-L-Pro dipeptide + H2O = an L-alpha-amino acid + L-proline. Its function is as follows. Splits dipeptides with a prolyl residue in the C-terminal position. This is Xaa-Pro dipeptidase from Shewanella loihica (strain ATCC BAA-1088 / PV-4).